We begin with the raw amino-acid sequence, 631 residues long: Phosphomethylpyrimidine synthase (631 aa).

Substrate-binding positions include N239, M268, Y297, H333, 353 to 355, 394 to 397, and E433; these read SRG and DGLR. A Zn(2+)-binding site is contributed by H437. Position 460 (Y460) interacts with substrate. Residue H501 participates in Zn(2+) binding. Residues C581, C584, and C589 each coordinate [4Fe-4S] cluster.

The protein belongs to the ThiC family. In terms of assembly, homodimer. [4Fe-4S] cluster serves as cofactor.

The enzyme catalyses 5-amino-1-(5-phospho-beta-D-ribosyl)imidazole + S-adenosyl-L-methionine = 4-amino-2-methyl-5-(phosphooxymethyl)pyrimidine + CO + 5'-deoxyadenosine + formate + L-methionine + 3 H(+). It participates in cofactor biosynthesis; thiamine diphosphate biosynthesis. Catalyzes the synthesis of the hydroxymethylpyrimidine phosphate (HMP-P) moiety of thiamine from aminoimidazole ribotide (AIR) in a radical S-adenosyl-L-methionine (SAM)-dependent reaction. The protein is Phosphomethylpyrimidine synthase of Escherichia coli O45:K1 (strain S88 / ExPEC).